Reading from the N-terminus, the 241-residue chain is Sugar fermentation stimulation protein homolog (241 aa).

This sequence belongs to the SfsA family.

This Halorhodospira halophila (strain DSM 244 / SL1) (Ectothiorhodospira halophila (strain DSM 244 / SL1)) protein is Sugar fermentation stimulation protein homolog.